The primary structure comprises 309 residues: MNFEKIIAQNKLKTNAVLTTYCVIFAFIGLLVDVIRINANDLGIALFKLITFQIFPTITVIMFLVAFVVIVVCIQNFSSIMLSGDEYKLIDPSKVLSSKENQIHGLLLELLEEAKLNFEPKLYIINAPYMNAFASGWNETNSLIALTSALIERLDRDELKAVIAHELSHIRHNDIRLTMCVGILSNIMLLVANFSVYFFMGNRKNSGANLAKMILLVLQIVLPFLTLILQMYLSRTREYMADSGAAFLMHDSKPMIRALQKISNDYKENDYKEIDTNSTRSAAYLFNAEMFSTHPSIKNRIQSLSRRAL.

2 helical membrane passes run 15 to 35 (NAVLTTYCVIFAFIGLLVDVI) and 54 to 74 (IFPTITVIMFLVAFVVIVVCI). Zn(2+) is bound at residue H165. Residue E166 is part of the active site. H169 provides a ligand contact to Zn(2+). 2 helical membrane passes run 181–201 (VGILSNIMLLVANFSVYFFMG) and 213–233 (MILLVLQIVLPFLTLILQMYL). Zn(2+) is bound at residue E238.

The protein belongs to the peptidase M48B family. It depends on Zn(2+) as a cofactor.

Its subcellular location is the cell inner membrane. In Helicobacter acinonychis (strain Sheeba), this protein is Protease HtpX homolog.